The primary structure comprises 179 residues: Large ribosomal subunit protein uL6 (179 aa).

The protein belongs to the universal ribosomal protein uL6 family. Part of the 50S ribosomal subunit.

This protein binds to the 23S rRNA, and is important in its secondary structure. It is located near the subunit interface in the base of the L7/L12 stalk, and near the tRNA binding site of the peptidyltransferase center. This is Large ribosomal subunit protein uL6 from Crocosphaera subtropica (strain ATCC 51142 / BH68) (Cyanothece sp. (strain ATCC 51142)).